A 392-amino-acid polypeptide reads, in one-letter code: Probable tRNA sulfurtransferase (392 aa).

One can recognise a THUMP domain in the interval 59-166; that stretch reads DEIIERVKKV…ECSFVFTKKV (108 aa). ATP contacts are provided by residues 183–184, 208–209, Arg-265, Gly-287, and Gln-296; these read LL and HF.

This sequence belongs to the ThiI family.

The protein resides in the cytoplasm. It catalyses the reaction [ThiI sulfur-carrier protein]-S-sulfanyl-L-cysteine + a uridine in tRNA + 2 reduced [2Fe-2S]-[ferredoxin] + ATP + H(+) = [ThiI sulfur-carrier protein]-L-cysteine + a 4-thiouridine in tRNA + 2 oxidized [2Fe-2S]-[ferredoxin] + AMP + diphosphate. It carries out the reaction [ThiS sulfur-carrier protein]-C-terminal Gly-Gly-AMP + S-sulfanyl-L-cysteinyl-[cysteine desulfurase] + AH2 = [ThiS sulfur-carrier protein]-C-terminal-Gly-aminoethanethioate + L-cysteinyl-[cysteine desulfurase] + A + AMP + 2 H(+). It participates in cofactor biosynthesis; thiamine diphosphate biosynthesis. Functionally, catalyzes the ATP-dependent transfer of a sulfur to tRNA to produce 4-thiouridine in position 8 of tRNAs, which functions as a near-UV photosensor. Also catalyzes the transfer of sulfur to the sulfur carrier protein ThiS, forming ThiS-thiocarboxylate. This is a step in the synthesis of thiazole, in the thiamine biosynthesis pathway. The sulfur is donated as persulfide by IscS. This chain is Probable tRNA sulfurtransferase, found in Alkaliphilus metalliredigens (strain QYMF).